The sequence spans 1324 residues: Structural maintenance of chromosomes protein 4 (1324 aa).

The tract at residues Met-1–Glu-24 is disordered. Phosphothreonine; by CDC2 is present on Thr-19. Gly-155–Ser-162 provides a ligand contact to ATP. 2 coiled-coil regions span residues Gln-310–Glu-337 and Asn-370–Leu-628. One can recognise an SMC hinge domain in the interval Asn-651 to Ala-764. Coiled-coil stretches lie at residues Tyr-825–Leu-1077 and Leu-1297–Asp-1324.

It belongs to the SMC family. SMC4 subfamily. In terms of assembly, forms a heterodimer with cut14/smc2. Component of the condensin complex, which contains the smc2 and smc4 heterodimer, and three non smc subunits that probably regulate the complex: cnd1, cnd2 and cnd3. Interacts with C1739.07. Post-translationally, phosphorylated by CDC2 on Thr-19 at metaphase.

The protein resides in the nucleus. It is found in the cytoplasm. Its subcellular location is the chromosome. Its function is as follows. Central component of the condensin complex, a complex required for conversion of interphase chromatin into mitotic-like condense chromosomes. The condensin complex probably introduces positive supercoils into relaxed DNA in the presence of type I topoisomerases and converts nicked DNA into positive knotted forms in the presence of type II topoisomerases. This is Structural maintenance of chromosomes protein 4 (cut3) from Schizosaccharomyces pombe (strain 972 / ATCC 24843) (Fission yeast).